The following is a 384-amino-acid chain: N-acetyldiaminopimelate deacetylase (384 aa).

Residue Asp-73 is part of the active site. Glu-132 functions as the Proton acceptor in the catalytic mechanism.

The protein belongs to the peptidase M20A family. N-acetyldiaminopimelate deacetylase subfamily.

It catalyses the reaction N-acetyl-(2S,6S)-2,6-diaminopimelate + H2O = (2S,6S)-2,6-diaminopimelate + acetate. The protein operates within amino-acid biosynthesis; L-lysine biosynthesis via DAP pathway; LL-2,6-diaminopimelate from (S)-tetrahydrodipicolinate (acetylase route): step 3/3. Catalyzes the conversion of N-acetyl-diaminopimelate to diaminopimelate and acetate. The sequence is that of N-acetyldiaminopimelate deacetylase from Limosilactobacillus fermentum (strain NBRC 3956 / LMG 18251) (Lactobacillus fermentum).